A 243-amino-acid polypeptide reads, in one-letter code: UDP-2,3-diacylglucosamine hydrolase (243 aa).

Positions 9, 11, 42, 79, and 114 each coordinate Mn(2+). 79–80 (NR) contributes to the substrate binding site. 4 residues coordinate substrate: D122, S160, N164, and H195. Mn(2+) contacts are provided by H195 and H197.

This sequence belongs to the LpxH family. The cofactor is Mn(2+).

The protein resides in the cell inner membrane. It catalyses the reaction UDP-2-N,3-O-bis[(3R)-3-hydroxytetradecanoyl]-alpha-D-glucosamine + H2O = 2-N,3-O-bis[(3R)-3-hydroxytetradecanoyl]-alpha-D-glucosaminyl 1-phosphate + UMP + 2 H(+). The protein operates within glycolipid biosynthesis; lipid IV(A) biosynthesis; lipid IV(A) from (3R)-3-hydroxytetradecanoyl-[acyl-carrier-protein] and UDP-N-acetyl-alpha-D-glucosamine: step 4/6. In terms of biological role, hydrolyzes the pyrophosphate bond of UDP-2,3-diacylglucosamine to yield 2,3-diacylglucosamine 1-phosphate (lipid X) and UMP by catalyzing the attack of water at the alpha-P atom. Involved in the biosynthesis of lipid A, a phosphorylated glycolipid that anchors the lipopolysaccharide to the outer membrane of the cell. The protein is UDP-2,3-diacylglucosamine hydrolase of Coxiella burnetii (strain RSA 331 / Henzerling II).